The sequence spans 295 residues: Protoheme IX farnesyltransferase 2 (295 aa).

Transmembrane regions (helical) follow at residues 9–29, 36–56, 83–103, 108–128, 135–155, 163–183, 209–229, 230–250, and 264–284; these read ITKP…FFLA, FALF…GCVF, LPLA…LLYV, LSAF…SLWL, GTLV…CAVS, VTLL…IAIF, IVLY…GGYA, GLGY…MAWG, and VFGF…VDSQ.

This sequence belongs to the UbiA prenyltransferase family. Protoheme IX farnesyltransferase subfamily.

The protein resides in the cell inner membrane. It carries out the reaction heme b + (2E,6E)-farnesyl diphosphate + H2O = Fe(II)-heme o + diphosphate. Its pathway is porphyrin-containing compound metabolism; heme O biosynthesis; heme O from protoheme: step 1/1. Functionally, converts heme B (protoheme IX) to heme O by substitution of the vinyl group on carbon 2 of heme B porphyrin ring with a hydroxyethyl farnesyl side group. The chain is Protoheme IX farnesyltransferase 2 from Pseudomonas putida (strain GB-1).